Reading from the N-terminus, the 442-residue chain is tRNA modification GTPase MnmE (442 aa).

Positions 23, 82, and 121 each coordinate (6S)-5-formyl-5,6,7,8-tetrahydrofolate. The TrmE-type G domain maps to 217–363 (PFKIAIIGET…LVDLLTKYIN (147 aa)). N227 is a K(+) binding site. Residues 227–232 (NVGKSS), 246–252 (SNIKGST), and 271–274 (DTAG) contribute to the GTP site. S231 contributes to the Mg(2+) binding site. Residues S246, I248, and S251 each contribute to the K(+) site. Residue T252 participates in Mg(2+) binding. Residue K442 coordinates (6S)-5-formyl-5,6,7,8-tetrahydrofolate.

The protein belongs to the TRAFAC class TrmE-Era-EngA-EngB-Septin-like GTPase superfamily. TrmE GTPase family. Homodimer. Heterotetramer of two MnmE and two MnmG subunits. It depends on K(+) as a cofactor.

The protein localises to the cytoplasm. In terms of biological role, exhibits a very high intrinsic GTPase hydrolysis rate. Involved in the addition of a carboxymethylaminomethyl (cmnm) group at the wobble position (U34) of certain tRNAs, forming tRNA-cmnm(5)s(2)U34. The chain is tRNA modification GTPase MnmE from Mycoplasma genitalium (strain ATCC 33530 / DSM 19775 / NCTC 10195 / G37) (Mycoplasmoides genitalium).